Here is an 894-residue protein sequence, read N- to C-terminus: Histone-lysine N-methyltransferase EZ2 (894 aa).

The segment covering 1–11 has biased composition (low complexity); it reads MASSSKASDSS. Disordered stretches follow at residues 1–25, 395–447, and 491–513; these read MASS…GKDA, SSVS…KRQK, and KKTS…VGRQ. Polar residues predominate over residues 395-421; that stretch reads SSVSAEESTTTPSADISETENVSSDLP. Residues 425–435 are compositionally biased toward basic residues; that stretch reads LRKHKISKHGP. Residues 503-513 show a composition bias toward polar residues; it reads PATTMENVGRQ. Positions 527 to 577 constitute an SANT domain; sequence TLSCWSALERDLYLKGIEIFGKNSCLIARNLLSGLKTCIEVANYMYNNGAA. Residues 627–731 enclose the CXC domain; the sequence is AGHPTVRKRT…SLGEPLARGD (105 aa). An SET domain is found at 746 to 861; sequence QRILLGRSDV…ASEELFYDYR (116 aa). Residues 867 to 894 form a disordered region; the sequence is APAWARRPEGSKKDEASVSHRRAHKVAR. A compositionally biased stretch (basic and acidic residues) spans 872 to 884; that stretch reads RRPEGSKKDEASV. Residues 885–894 are compositionally biased toward basic residues; the sequence is SHRRAHKVAR.

This sequence belongs to the class V-like SAM-binding methyltransferase superfamily. Histone-lysine methyltransferase family. EZ subfamily.

Its subcellular location is the nucleus. The catalysed reaction is L-lysyl(27)-[histone H3] + 3 S-adenosyl-L-methionine = N(6),N(6),N(6)-trimethyl-L-lysyl(27)-[histone H3] + 3 S-adenosyl-L-homocysteine + 3 H(+). Polycomb group (PcG) protein. Catalytic subunit of some PcG multiprotein complex, which methylates 'Lys-27' of histone H3, leading to transcriptional repression of the affected target genes. PcG proteins are not required to initiate repression, but to maintain it during later stages of development. The chain is Histone-lysine N-methyltransferase EZ2 (EZ2) from Zea mays (Maize).